A 106-amino-acid chain; its full sequence is MICOS complex subunit MIC12 (106 aa).

Residues 11–27 form a helical membrane-spanning segment; it reads VKWTLSVGVIGSVFYLY.

The protein belongs to the MICOS complex subunit Mic12 family. Component of the mitochondrial contact site and cristae organizing system (MICOS) complex.

The protein localises to the mitochondrion inner membrane. Component of the MICOS complex, a large protein complex of the mitochondrial inner membrane that plays crucial roles in the maintenance of crista junctions, inner membrane architecture, and formation of contact sites to the outer membrane. The sequence is that of MICOS complex subunit MIC12 (AIM5) from Saccharomyces cerevisiae (strain RM11-1a) (Baker's yeast).